A 327-amino-acid chain; its full sequence is Phenylalanine--tRNA ligase alpha subunit (327 aa).

Glu-252 contacts Mg(2+).

Belongs to the class-II aminoacyl-tRNA synthetase family. Phe-tRNA synthetase alpha subunit type 1 subfamily. In terms of assembly, tetramer of two alpha and two beta subunits. Requires Mg(2+) as cofactor.

It is found in the cytoplasm. It carries out the reaction tRNA(Phe) + L-phenylalanine + ATP = L-phenylalanyl-tRNA(Phe) + AMP + diphosphate + H(+). The sequence is that of Phenylalanine--tRNA ligase alpha subunit from Shewanella denitrificans (strain OS217 / ATCC BAA-1090 / DSM 15013).